The chain runs to 428 residues: UDP-N-acetylglucosamine 1-carboxyvinyltransferase 2 (428 aa).

22–23 (KN) is a binding site for phosphoenolpyruvate. A UDP-N-acetyl-alpha-D-glucosamine-binding site is contributed by Arg-92. Catalysis depends on Cys-116, which acts as the Proton donor. Cys-116 is modified (2-(S-cysteinyl)pyruvic acid O-phosphothioketal). Residues 121-125 (RPIDQ), Asp-304, and Ile-326 each bind UDP-N-acetyl-alpha-D-glucosamine.

Belongs to the EPSP synthase family. MurA subfamily.

It localises to the cytoplasm. The catalysed reaction is phosphoenolpyruvate + UDP-N-acetyl-alpha-D-glucosamine = UDP-N-acetyl-3-O-(1-carboxyvinyl)-alpha-D-glucosamine + phosphate. It participates in cell wall biogenesis; peptidoglycan biosynthesis. Its function is as follows. Cell wall formation. Adds enolpyruvyl to UDP-N-acetylglucosamine. In Shouchella clausii (strain KSM-K16) (Alkalihalobacillus clausii), this protein is UDP-N-acetylglucosamine 1-carboxyvinyltransferase 2.